Consider the following 592-residue polypeptide: MAVTSSSSSQPPAASQPGHFKRLWAYLRPELSSFILAMVAMGVVAATEGIIPKVVKDLLDQGFGGEYAGKLWRVPAMLVGIAVVRGVAQFGATYFLSLVSNKVLLNLRMKMFERLLQAPAAFYQRNTAASLINAVIFEVNQVLQVLTGVFITLVRDSMTVLALLIFLFYTNWRLTLVVAVILPVIGFLMSRINRRLRSLNREHQNLTNEAAYVVEEAAGGYKVVKLHGGEAYESRRFNAMTNRLRGYAMRMAVAGGLNQPVTQFLAALALSVILAIAMVQAQANQTTVGGFTGFVMAMLLLISPLKHLTDVNQPMQRGLTAAEFIFGLIDTPIEPQDGGKHIDRARGDLRFEHVTFRYGPDGRAALDSIDLHVKAGEIVALVGPSGSGKTTLVNLLPRFFEPTSGRIVLDGDALADLSLQDLRRQIAFVSQDVVLFNDTIAANVAYGARDASEIDMARVRRALEAAYLTDVVDNLPDGVDTNIGDNGSKLSGGQRQRLAIARAVYKDAPILILDEATSALDSESERQVQAALEALMQGRTTLVIAHRLSTIENADRIVVLEHGQIVEAGTHRELLDRDGLYAGLHRIQFATQ.

A run of 6 helical transmembrane segments spans residues 31–51, 76–96, 134–154, 161–181, 261–281, and 288–308; these read LSSF…EGII, AMLV…TYFL, AVIF…ITLV, LALL…VAVI, VTQF…MVQA, and VGGF…LKHL. The ABC transmembrane type-1 domain maps to 35–317; the sequence is ILAMVAMGVV…LTDVNQPMQR (283 aa). In terms of domain architecture, ABC transporter spans 349-587; sequence LRFEHVTFRY…DGLYAGLHRI (239 aa). 383–390 contacts ATP; the sequence is GPSGSGKT.

The protein belongs to the ABC transporter superfamily. Lipid exporter (TC 3.A.1.106) family. In terms of assembly, homodimer.

The protein resides in the cell inner membrane. It carries out the reaction ATP + H2O + lipid A-core oligosaccharideSide 1 = ADP + phosphate + lipid A-core oligosaccharideSide 2.. Its function is as follows. Involved in lipopolysaccharide (LPS) biosynthesis. Translocates lipid A-core from the inner to the outer leaflet of the inner membrane. Transmembrane domains (TMD) form a pore in the inner membrane and the ATP-binding domain (NBD) is responsible for energy generation. The polypeptide is ATP-dependent lipid A-core flippase (Ralstonia nicotianae (strain ATCC BAA-1114 / GMI1000) (Ralstonia solanacearum)).